A 173-amino-acid polypeptide reads, in one-letter code: Photosystem I assembly protein Ycf3 (173 aa).

TPR repeat units follow at residues 35 to 68 (AYVYYRDGLSAQNDGDYAEALENYDEALKLEDNP), 72 to 105 (GETLKNMAIIYMSNGEEERAIETYRRALDENSNQ), and 120 to 153 (GRIAEEDGRQDDADRWFDQAAEAWTQAVRLNPGG).

The protein belongs to the Ycf3 family.

The protein localises to the cellular thylakoid membrane. Functionally, essential for the assembly of the photosystem I (PSI) complex. May act as a chaperone-like factor to guide the assembly of the PSI subunits. The polypeptide is Photosystem I assembly protein Ycf3 (Parasynechococcus marenigrum (strain WH8102)).